Consider the following 611-residue polypeptide: UPF0508 protein SCY_3114 (611 aa).

Belongs to the UPF0508 family.

The polypeptide is UPF0508 protein SCY_3114 (Saccharomyces cerevisiae (strain YJM789) (Baker's yeast)).